The primary structure comprises 295 residues: tRNA pseudouridine synthase A (295 aa).

Asp67 (nucleophile) is an active-site residue. Substrate is bound at residue Tyr125.

This sequence belongs to the tRNA pseudouridine synthase TruA family. In terms of assembly, homodimer.

The catalysed reaction is uridine(38/39/40) in tRNA = pseudouridine(38/39/40) in tRNA. Formation of pseudouridine at positions 38, 39 and 40 in the anticodon stem and loop of transfer RNAs. This is tRNA pseudouridine synthase A from Prochlorococcus marinus (strain MIT 9303).